Reading from the N-terminus, the 326-residue chain is Pancreas transcription factor 1 subunit alpha (326 aa).

The bHLH domain maps to 162 to 214 (QLRQAANVRERRRMQSINDAFEGLRSHIPTLPYEKRLSKVDTLRLAIGYINFL). Positions 229–240 (TGGCGGPGGSRH) are enriched in gly residues. Disordered stretches follow at residues 229–249 (TGGCGGPGGSRHLGGDSPGNQ) and 304–326 (DPRKLNSKSFDNIENEPPFEFVS).

Component of the pancreas transcription factor 1 complex (PTF1) which is composed of TCF3/p75, TCF12/p64 and PTF1A/p48. TCF3 is responsible for the nuclear import of the p48/p64 complex. Interacts with TCF3 and RBPSUH/RBP-Jkappa. Exocrine pancreas-specific. Expressed in azaserine-induced pancreatic tumors (at protein level). Expressed in AR42J cells but not in ARIP, DSL6A, or DSL6B cells. Down-regulation is associated with the change of an azaserine-induced acinar cell carcinoma to a ductal phenotype.

The protein localises to the nucleus. It localises to the cytoplasm. Its function is as follows. Transcription factor implicated in the cell fate determination in various organs. Binds to the E-box consensus sequence 5'-CANNTG-3'. Plays a role in early and late pancreas development and differentiation. Important for determining whether cells allocated to the pancreatic buds continue towards pancreatic organogenesis or revert back to duodenal fates. May be involved in the maintenance of exocrine pancreas-specific gene expression including ELA1 and amylase. Required for the formation of pancreatic acinar and ductal cells. Plays an important role in cerebellar development. Directly regulated by FOXN4 and RORC during retinal development, FOXN4-PTF1A pathway plays a central role in directing the differentiation of retinal progenitors towards horizontal and amacrine fates. The chain is Pancreas transcription factor 1 subunit alpha (Ptf1a) from Rattus norvegicus (Rat).